Here is a 276-residue protein sequence, read N- to C-terminus: MALLTEKRVKKTHAPASDSSPEESDSEGSQNSASEAEGNAGWADSIQKVLKTTKPKTQKKTVLARAKKSQAAVRFQKDAANKKPGFDFEIEKADVKEEDEGDNHEDEKPQASALDATLTKQQRKNVPLQLRVKPSFRDMERERTLRKVATRGVVQFFNAVRIQQKDLQQQLEEAGPLDSRQDAVLNNINKRKFLDVLMSGKRAKSTPVDNAVKKEEQETDDDDEDKGSSGKKKSEWSVLREDFMTNKKIKHWDEEDDDEEGHNDEADDSDYDDGEE.

2 disordered regions span residues 1 to 132 and 201 to 276; these read MALL…QLRV and KRAK…DGEE. Basic and acidic residues-rich tracts occupy residues 75–95 and 226–245; these read FQKD…KADV and KGSS…DFMT. Residues 254–276 are compositionally biased toward acidic residues; it reads EEDDDEEGHNDEADDSDYDDGEE. At Ser269 the chain carries Phosphoserine. Tyr271 carries the post-translational modification Phosphotyrosine.

It belongs to the RRP15 family.

The sequence is that of RRP15-like protein from Drosophila melanogaster (Fruit fly).